Consider the following 63-residue polypeptide: Large ribosomal subunit protein bL35 (63 aa).

Belongs to the bacterial ribosomal protein bL35 family.

The protein is Large ribosomal subunit protein bL35 of Campylobacter jejuni subsp. jejuni serotype O:2 (strain ATCC 700819 / NCTC 11168).